The following is a 379-amino-acid chain: Chaperone protein DnaJ (379 aa).

Positions 5–70 constitute a J domain; sequence DYYELLEVSR…QKRAAYDQFG (66 aa). A CR-type zinc finger spans residues 135-213; it reads GKEVEITVPR…CHGQGRVRES (79 aa). Residues C148, C151, C165, C168, C187, C190, C201, and C204 each coordinate Zn(2+). CXXCXGXG motif repeat units follow at residues 148-155, 165-172, 187-194, and 201-208; these read CTVCEGSG, CETCQGMG, CPTCHGEG, and CASCHGQG.

It belongs to the DnaJ family. Homodimer. Zn(2+) is required as a cofactor.

The protein localises to the cytoplasm. Participates actively in the response to hyperosmotic and heat shock by preventing the aggregation of stress-denatured proteins and by disaggregating proteins, also in an autonomous, DnaK-independent fashion. Unfolded proteins bind initially to DnaJ; upon interaction with the DnaJ-bound protein, DnaK hydrolyzes its bound ATP, resulting in the formation of a stable complex. GrpE releases ADP from DnaK; ATP binding to DnaK triggers the release of the substrate protein, thus completing the reaction cycle. Several rounds of ATP-dependent interactions between DnaJ, DnaK and GrpE are required for fully efficient folding. Also involved, together with DnaK and GrpE, in the DNA replication of plasmids through activation of initiation proteins. The polypeptide is Chaperone protein DnaJ (Legionella pneumophila (strain Lens)).